Reading from the N-terminus, the 101-residue chain is CRISPR-associated endoribonuclease Cas2 (101 aa).

Mg(2+) is bound at residue aspartate 17.

Belongs to the CRISPR-associated endoribonuclease Cas2 protein family. In terms of assembly, homodimer, forms a heterotetramer with a Cas1 homodimer. It depends on Mg(2+) as a cofactor.

Its function is as follows. CRISPR (clustered regularly interspaced short palindromic repeat), is an adaptive immune system that provides protection against mobile genetic elements (viruses, transposable elements and conjugative plasmids). CRISPR clusters contain sequences complementary to antecedent mobile elements and target invading nucleic acids. CRISPR clusters are transcribed and processed into CRISPR RNA (crRNA). Functions as a ssRNA-specific endoribonuclease. Involved in the integration of spacer DNA into the CRISPR cassette. This Methanopyrus kandleri (strain AV19 / DSM 6324 / JCM 9639 / NBRC 100938) protein is CRISPR-associated endoribonuclease Cas2.